The following is a 668-amino-acid chain: Echinocandin B biosynthetic cluster protein J (668 aa).

5 disordered regions span residues 1–20 (MHFA…DQSL), 92–113 (YTPP…PPTP), 224–322 (PLDH…QSAD), 330–349 (EVAE…SIPT), and 483–506 (NCSS…PPLK). Polar residues predominate over residues 96-106 (SLDSRSSATPP). Residues 264–275 (NPEPGTPTPPSP) are compositionally biased toward pro residues. Polar residues predominate over residues 311 to 322 (YRSTPSPCQSAD). Residues 484–494 (CSSSSCSSSAS) are compositionally biased toward low complexity. Residues 495 to 505 (KKNEEKREPPL) are compositionally biased toward basic and acidic residues.

Its pathway is antifungal biosynthesis. In terms of biological role, part of the gene cluster that mediates the biosynthesis of echinocandin B, a fungal lipidated cyclic hexapeptide that acts as an antifungal agent. Linoleoyl-AMP, produced by the fatty-acyl-AMP ligase ecdI, is transferred to the initiation carrier domain (T0) of ecdA. The linoleoyl-S-phosphopantetheinyl-T0 is sequentially extended with L-ornithine, L-threonine, L-proline, L-homotyrosine, L-threonine, and 4R-methyl-L-proline to form the linear hexapeptide. Thereafter, the terminal condensation (C7) performs macrocyclization of the NRPS product and the cyclic scaffold is released from ecdA. All six of the amino acid residues are hydroxylated, including 4R,5R-dihydroxy-L-ornithine, 4R-hydroxyl-L-proline, 3S,4S-dihydroxy-L-homotyrosine, and 3S-hydroxyl-4S-methyl-L-prolin. In the pathway, all the hydroxylation reactions are proposed to occur following completion of the cyclic peptide, so the unhydroxylated precursor produced by ecdA will undergo six rounds of hydroxylation. Five hydroxylase genes (ecdG, ecdH, ecdK, htyE and htyF) are embedded within the echinocandin B (ecd) and L-homotyrosine (hty) clusters. This is Echinocandin B biosynthetic cluster protein J from Aspergillus rugulosus (Emericella rugulosa).